The sequence spans 313 residues: Dihydroorotate dehydrogenase B (NAD(+)), catalytic subunit (313 aa).

FMN is bound by residues Ser21 and 45-46 (KA). Residues Lys45 and 69–73 (NAIGL) each bind substrate. Asn99 and Asn127 together coordinate FMN. Position 127 (Asn127) interacts with substrate. Cys130 acts as the Nucleophile in catalysis. Lys165 and Ile191 together coordinate FMN. 192–193 (NT) contacts substrate. Residues Gly217, 243-244 (GG), and 265-266 (GT) each bind FMN.

The protein belongs to the dihydroorotate dehydrogenase family. Type 1 subfamily. Heterotetramer of 2 PyrK and 2 PyrD type B subunits. FMN serves as cofactor.

The protein resides in the cytoplasm. It catalyses the reaction (S)-dihydroorotate + NAD(+) = orotate + NADH + H(+). It participates in pyrimidine metabolism; UMP biosynthesis via de novo pathway; orotate from (S)-dihydroorotate (NAD(+) route): step 1/1. Functionally, catalyzes the conversion of dihydroorotate to orotate with NAD(+) as electron acceptor. This Geobacillus kaustophilus (strain HTA426) protein is Dihydroorotate dehydrogenase B (NAD(+)), catalytic subunit (pyrD).